Consider the following 878-residue polypeptide: Alanine--tRNA ligase (878 aa).

Histidine 568, histidine 572, cysteine 670, and histidine 674 together coordinate Zn(2+).

Belongs to the class-II aminoacyl-tRNA synthetase family. It depends on Zn(2+) as a cofactor.

The protein resides in the cytoplasm. It carries out the reaction tRNA(Ala) + L-alanine + ATP = L-alanyl-tRNA(Ala) + AMP + diphosphate. Functionally, catalyzes the attachment of alanine to tRNA(Ala) in a two-step reaction: alanine is first activated by ATP to form Ala-AMP and then transferred to the acceptor end of tRNA(Ala). Also edits incorrectly charged Ser-tRNA(Ala) and Gly-tRNA(Ala) via its editing domain. The protein is Alanine--tRNA ligase of Latilactobacillus sakei subsp. sakei (strain 23K) (Lactobacillus sakei subsp. sakei).